The following is a 277-amino-acid chain: Phosphoenolpyruvate synthase regulatory protein (277 aa).

157-164 (GVSRCGKT) contributes to the ADP binding site.

This sequence belongs to the pyruvate, phosphate/water dikinase regulatory protein family. PSRP subfamily.

It carries out the reaction [pyruvate, water dikinase] + ADP = [pyruvate, water dikinase]-phosphate + AMP + H(+). The catalysed reaction is [pyruvate, water dikinase]-phosphate + phosphate + H(+) = [pyruvate, water dikinase] + diphosphate. Functionally, bifunctional serine/threonine kinase and phosphorylase involved in the regulation of the phosphoenolpyruvate synthase (PEPS) by catalyzing its phosphorylation/dephosphorylation. In Salmonella gallinarum (strain 287/91 / NCTC 13346), this protein is Phosphoenolpyruvate synthase regulatory protein.